The sequence spans 559 residues: Glucose-6-phosphate isomerase (559 aa).

The active-site Proton donor is the glutamate 352. Residues histidine 383 and lysine 511 contribute to the active site.

It belongs to the GPI family.

Its subcellular location is the cytoplasm. The catalysed reaction is alpha-D-glucose 6-phosphate = beta-D-fructose 6-phosphate. The protein operates within carbohydrate biosynthesis; gluconeogenesis. Its pathway is carbohydrate degradation; glycolysis; D-glyceraldehyde 3-phosphate and glycerone phosphate from D-glucose: step 2/4. Catalyzes the reversible isomerization of glucose-6-phosphate to fructose-6-phosphate. The protein is Glucose-6-phosphate isomerase of Chlorobaculum tepidum (strain ATCC 49652 / DSM 12025 / NBRC 103806 / TLS) (Chlorobium tepidum).